Here is a 551-residue protein sequence, read N- to C-terminus: Cilia- and flagella-associated protein 45 (551 aa).

Disordered stretches follow at residues 1-30 and 461-489; these read MPLSTAGILSSSSAASNRSRNKARYRTKAV and RLEEEKKATGRLQHANELRRQVRENQQKE. The stretch at 157–526 forms a coiled coil; it reads NNNKKLSDLE…IKRKKLEELR (370 aa).

Belongs to the CFAP45 family. Microtubule inner protein component of sperm flagellar doublet microtubules. Interacts with AK8; dimerization with AK8 may create a cavity at the interface of the dimer that can accommodate AMP. Interacts with CFAP52. Interacts with ENKUR. Directly interacts with DNALI1. Interacts with DNAH11. Interacts with DNAI1. Expressed in respiratory cells and in sperm (at protein level). Expressed in nasopharyngeal epithelium and trachea.

The protein resides in the cytoplasm. Its subcellular location is the cytoskeleton. It is found in the cilium axoneme. The protein localises to the flagellum axoneme. It localises to the cell projection. The protein resides in the cilium. Its subcellular location is the flagellum. Functionally, microtubule inner protein (MIP) part of the dynein-decorated doublet microtubules (DMTs) in cilia axoneme, which is required for motile cilia beating. It is an AMP-binding protein that may facilitate dynein ATPase-dependent ciliary and flagellar beating via adenine nucleotide homeostasis. May function as a donor of AMP to AK8 and hence promote ADP production. In Homo sapiens (Human), this protein is Cilia- and flagella-associated protein 45.